The primary structure comprises 707 residues: Anti-sigma-I factor RsgI9 (707 aa).

At 1–149 (MKITGVIVRI…NFSRISNIKN (149 aa)) the chain is on the cytoplasmic side. The RsgI N-terminal anti-sigma domain occupies 3–50 (ITGVIVRIHKDRAIIRTDDNRLLAVKRHNDMMVGQIVSFDANEVHKVE). Residues 150–172 (FSRIASIAAAFVLIFLFGRNVML) traverse the membrane as a helical segment. Residues 173 to 707 (NNSSDSEYAY…DSEEKKEYIQ (535 aa)) lie on the Extracellular side of the membrane. Residues 256-283 (NDKNKKTRDKREEKIDELKETIEQGIEA) are a coiled coil. The segment at 345 to 392 (EDNTELAPTPTPVPPETPEPTPTPTASEATPSNSPVESKSPEAVPELG) is disordered. A compositionally biased stretch (pro residues) spans 353–367 (TPTPVPPETPEPTPT). Over residues 368–379 (PTASEATPSNSP) the composition is skewed to low complexity.

The protein localises to the cell membrane. The chain is Anti-sigma-I factor RsgI9 from Acetivibrio thermocellus (strain ATCC 27405 / DSM 1237 / JCM 9322 / NBRC 103400 / NCIMB 10682 / NRRL B-4536 / VPI 7372) (Clostridium thermocellum).